The chain runs to 318 residues: Methionyl-tRNA formyltransferase (318 aa).

112–115 (SILP) provides a ligand contact to (6S)-5,6,7,8-tetrahydrofolate.

This sequence belongs to the Fmt family.

It carries out the reaction L-methionyl-tRNA(fMet) + (6R)-10-formyltetrahydrofolate = N-formyl-L-methionyl-tRNA(fMet) + (6S)-5,6,7,8-tetrahydrofolate + H(+). Its function is as follows. Attaches a formyl group to the free amino group of methionyl-tRNA(fMet). The formyl group appears to play a dual role in the initiator identity of N-formylmethionyl-tRNA by promoting its recognition by IF2 and preventing the misappropriation of this tRNA by the elongation apparatus. This chain is Methionyl-tRNA formyltransferase, found in Shewanella baltica (strain OS195).